Reading from the N-terminus, the 252-residue chain is MSSVTMRDMLKAGVHFGHQTRYWNPKMNTYIFGARNKIHIINLEQTLPLFNDAMAFLNKLAASNNKILFVGTKRAAQKAVSEEAQRCGMPYVDHRWLGGMLTNWKTIRQSIKRYRELEAQFQDGTFDKLTKKEALMRKREMDKLERSIGGIKDMGGLPDALFVIDVDHEDIALQEARKLGIPVVAVVDTNSNPDGVDYVIPGNDDAIRAIQLYVKAAADVILEGKQYAQNQTGGESEFVEVADEAAGEKAEG.

It belongs to the universal ribosomal protein uS2 family.

This is Small ribosomal subunit protein uS2 from Alcanivorax borkumensis (strain ATCC 700651 / DSM 11573 / NCIMB 13689 / SK2).